The primary structure comprises 330 residues: Ferredoxin--NADP reductase (330 aa).

FAD contacts are provided by glutamate 35, glutamine 43, tyrosine 48, valine 90, phenylalanine 123, aspartate 285, and threonine 326.

Belongs to the ferredoxin--NADP reductase type 2 family. As to quaternary structure, homodimer. FAD serves as cofactor.

The enzyme catalyses 2 reduced [2Fe-2S]-[ferredoxin] + NADP(+) + H(+) = 2 oxidized [2Fe-2S]-[ferredoxin] + NADPH. The polypeptide is Ferredoxin--NADP reductase (Streptococcus pyogenes serotype M28 (strain MGAS6180)).